A 290-amino-acid chain; its full sequence is Protein SSO1 (290 aa).

At 1 to 265 (MSYNNPYQLE…ARKARKNKIR (265 aa)) the chain is on the cytoplasmic side. Positions 190-252 (LAEVQARHQE…EQGVGHTDKA (63 aa)) constitute a t-SNARE coiled-coil homology domain. The helical; Anchor for type IV membrane protein transmembrane segment at 266–287 (CWLIVFAIIVVVVVVVVVPAVV) threads the bilayer. Residues 288 to 290 (KTR) are Extracellular-facing.

The protein belongs to the syntaxin family.

It localises to the membrane. Its function is as follows. Required for vesicle fusion with the plasma membrane. This Saccharomyces cerevisiae (strain ATCC 204508 / S288c) (Baker's yeast) protein is Protein SSO1 (SSO1).